A 455-amino-acid chain; its full sequence is Adenylyltransferase and sulfurtransferase UBA4 (455 aa).

ATP is bound by residues Gly-93, Asp-114, 121-125, Lys-138, and 182-183; these read SNLHR and DH. The Zn(2+) site is built by Cys-224 and Cys-227. Cys-241 serves as the catalytic Glycyl thioester intermediate; for adenylyltransferase activity. The Zn(2+) site is built by Cys-302 and Cys-305. One can recognise a Rhodanese domain in the interval 355-453; sequence QSREHTLIDV…WSEDIDAAFP (99 aa). The Cysteine persulfide intermediate; for sulfurtransferase activity role is filled by Cys-413.

The protein in the N-terminal section; belongs to the HesA/MoeB/ThiF family. UBA4 subfamily. Zn(2+) serves as cofactor.

It is found in the cytoplasm. The protein localises to the cytosol. It participates in tRNA modification; 5-methoxycarbonylmethyl-2-thiouridine-tRNA biosynthesis. Functionally, plays a central role in 2-thiolation of mcm(5)S(2)U at tRNA wobble positions of cytosolic tRNA(Lys), tRNA(Glu) and tRNA(Gln). Acts by mediating the C-terminal thiocarboxylation of sulfur carrier URM1. Its N-terminus first activates URM1 as acyl-adenylate (-COAMP), then the persulfide sulfur on the catalytic cysteine is transferred to URM1 to form thiocarboxylation (-COSH) of its C-terminus. The reaction probably involves hydrogen sulfide that is generated from the persulfide intermediate and that acts as a nucleophile towards URM1. Subsequently, a transient disulfide bond is formed. Does not use thiosulfate as sulfur donor; NFS1 probably acting as a sulfur donor for thiocarboxylation reactions. Prior mcm(5) tRNA modification by the elongator complex is required for 2-thiolation. May also be involved in protein urmylation. The chain is Adenylyltransferase and sulfurtransferase UBA4 from Lodderomyces elongisporus (strain ATCC 11503 / CBS 2605 / JCM 1781 / NBRC 1676 / NRRL YB-4239) (Yeast).